Consider the following 230-residue polypeptide: Sugar fermentation stimulation protein homolog (230 aa).

Belongs to the SfsA family.

This chain is Sugar fermentation stimulation protein homolog, found in Pyrococcus furiosus (strain ATCC 43587 / DSM 3638 / JCM 8422 / Vc1).